We begin with the raw amino-acid sequence, 56 residues long: Large ribosomal subunit protein bL32 (56 aa).

It belongs to the bacterial ribosomal protein bL32 family.

In Prochlorococcus marinus (strain MIT 9301), this protein is Large ribosomal subunit protein bL32.